The following is a 264-amino-acid chain: MSYISMKQLLEAGVHFGHETKRWNPKFKKFIFAERNGIFIIDLQKTLKQVDRSFDYIKDLAERGGVILFVGTKKQAQEIVELEARRTGMPYVTSRWLGGMLTNFKTMRTRIDRLNELDDLFESERINDRPKAERIQLASERERLLRFVGGIRKMNRLPDAIFVVDPTKEVIAVQEANKLGIPVIALADTDSDPDVIDYIVPGNDDAIRSIQLITHRVGDLLVEARGGHEDVSAGPVEEQSDEAQAAEQGTEGDTAQLTSSQGRS.

Residues 228–264 (HEDVSAGPVEEQSDEAQAAEQGTEGDTAQLTSSQGRS) are disordered. Residues 251-264 (EGDTAQLTSSQGRS) are compositionally biased toward polar residues.

It belongs to the universal ribosomal protein uS2 family.

This chain is Small ribosomal subunit protein uS2, found in Deinococcus radiodurans (strain ATCC 13939 / DSM 20539 / JCM 16871 / CCUG 27074 / LMG 4051 / NBRC 15346 / NCIMB 9279 / VKM B-1422 / R1).